A 325-amino-acid polypeptide reads, in one-letter code: MDSELKEEIPVHEEFILCGGAETQVLKCGPWTDLFHDQSVKRPKLLIFIIPGNPGFSAFYVPFAKALYSLTNRRFPVWTISHAGHALAPKDKKILTTSEDSNAQEIKDIYGLNGQIEHKLAFLRTHVPKDMKLVLIGHSIGSYFTLQMLKRVPELPVIRAFLLFPTIERMSESPNGRIATPLLCWFRYVLYVTGYLLLKPCPETIKSLLIRRGLQVMNLENEFSPLNILEPFCLANAAYLGGQEMMEVVKRDDETIKEHLCKLTFYYGTIDPWCPKEYYEDIKKDFPEGDIRLCEKNIPHAFITHFNQEMADMIADSLKDDLSKM.

Ser-139 acts as the Nucleophile in catalysis. Residues Asp-271 and His-300 each act as charge relay system in the active site.

Belongs to the AB hydrolase superfamily. LDAH family. In terms of tissue distribution, present in macrophage-rich areas in atherosclerotic lesions (at protein level). Expressed in monocytes and monocyte-derived macrophages (at protein level).

The protein localises to the lipid droplet. The protein resides in the endoplasmic reticulum. The enzyme catalyses a cholesterol ester + H2O = cholesterol + a fatty acid + H(+). Its function is as follows. Probable serine lipid hydrolase associated with lipid droplets. Has low cholesterol esterase activity. Appears to lack triglyceride lipase activity. Involved in cholesterol and triglyceride homeostasis; has opposing effects, stimulating cellular triglyceride accumulation and cellular cholesterol release. Acts antagonistically with PNPLA2/ATGL in regulation of cellular lipid stores. May regulate triglyceride accumulation indirectly through stimulation of PNPLA2/ATGL ubiquitination and proteasomal degradation. Promotes microtubule-dependent lipid droplet fusion. Highly expressed in macrophage-rich areas in atherosclerotic lesions, suggesting that it could promote cholesterol ester turnover in macrophages. This Homo sapiens (Human) protein is Lipid droplet-associated hydrolase.